The following is a 452-amino-acid chain: MPQACVIGLGRSGIAAARVLHRDGWQVTVFDQADNDQLRHMGQPLVQEGISLKLGDRLDPVKEAWPERIVVSPGVPWDIPLLVAAREKGVEVTGELELAWQYLHAVPWVGITGTNGKTTTTSLVQAIFQKAGLNAPACGNIGYAACELVLQNQNYDWIVAEISSYQIESSPTLAPQIGLWTTFTPDHLSRHKTLENYFNIKASLLSRSAIQVLNGDDPHLHSHGPNLYPQAHWTSTQGANHLAGLCDPKQGVYLQDNWVNAFGELIAPINLFKMPGQHNQQNLLMAIAAARLAGIDKKAITETLLTFTGVPHRLEPICTINGVQFINDSKATNYDAAEVGLSSMKGPTILIAGGEAKEGDDQAWLAQIRQKAVAVLLIGDAAPNFATRLKAVGYENYEIVETMANAVQRGLELASKNNASAVLLSPACASFDQYNSFEERGEDFRACCLGLV.

113–119 (GTNGKTT) is a binding site for ATP.

The protein belongs to the MurCDEF family.

Its subcellular location is the cytoplasm. It carries out the reaction UDP-N-acetyl-alpha-D-muramoyl-L-alanine + D-glutamate + ATP = UDP-N-acetyl-alpha-D-muramoyl-L-alanyl-D-glutamate + ADP + phosphate + H(+). The protein operates within cell wall biogenesis; peptidoglycan biosynthesis. Its function is as follows. Cell wall formation. Catalyzes the addition of glutamate to the nucleotide precursor UDP-N-acetylmuramoyl-L-alanine (UMA). The protein is UDP-N-acetylmuramoylalanine--D-glutamate ligase (murD) of Synechocystis sp. (strain ATCC 27184 / PCC 6803 / Kazusa).